A 912-amino-acid polypeptide reads, in one-letter code: Serine/threonine-protein kinase D1 (912 aa).

Y95 is subject to Phosphotyrosine. The Phorbol-ester/DAG-type 1 zinc-finger motif lies at 146–196 (PHALFVHSYRAPAFCDHCGEMLWGLVRQGLKCEGCGLNYHKRCAFKIPNNC). Phosphoserine occurs at positions 205, 208, 219, and 223. The Phorbol-ester/DAG-type 2 zinc finger occupies 270-320 (PHTFVIHSYTRPTVCQYCKKLLKGLFRQGLQCKDCRFNCHKRCAPKVPNNC). S345 carries the post-translational modification Phosphoserine. The interval 377–402 (NDSGEMQDPDPDHEDANRTISPSTSN) is disordered. S397 and S401 each carry phosphoserine; by MAPK13. A PH domain is found at 422–541 (TVMKEGWMVH…WEIAIQHALM (120 aa)). Y432 carries the phosphotyrosine modification. The residue at position 448 (S448) is a Phosphoserine. Y463 carries the phosphotyrosine; by ABL modification. S473 bears the Phosphoserine mark. At Y502 the chain carries Phosphotyrosine. The residue at position 548 (S548) is a Phosphoserine. Residues 583–839 (IFPDEVLGSG…VDKTLSHPWL (257 aa)) enclose the Protein kinase domain. Residues 589–597 (LGSGQFGIV) and K612 each bind ATP. D706 functions as the Proton acceptor in the catalytic mechanism. S738 carries the post-translational modification Phosphoserine; by PKC/PRKCD. At S742 the chain carries Phosphoserine; by autocatalysis and PKC/PRKCD. Y749 is modified (phosphotyrosine). A Phosphoserine; by autocatalysis modification is found at S910.

Belongs to the protein kinase superfamily. CAMK Ser/Thr protein kinase family. PKD subfamily. In terms of assembly, interacts (via N-terminus) with ADAP1/CENTA1. Interacts with MAPK13. Interacts with DAPK1 in an oxidative stress-regulated manner. Interacts with USP28; the interaction induces phosphorylation of USP28 and activated KRAS-mediated stabilization of ZNF304. Interacts with AKAP13 (via C-terminal domain). The cofactor is Mg(2+). Phosphorylated at Ser-397 and Ser-401 by MAPK13 during regulation of insulin secretion in pancreatic beta cells. Phosphorylated by DAPK1. Phosphorylated at Tyr-95 and by ABL at Tyr-463, which primes the kinase in response to oxidative stress, and promotes a second step activating phosphorylation at Ser-738/Ser-742 by PKRD. Phosphorylated on Ser-910 upon S.enterica infection in macrophages.

Its subcellular location is the cytoplasm. The protein localises to the cell membrane. The protein resides in the golgi apparatus. It is found in the trans-Golgi network. It catalyses the reaction L-seryl-[protein] + ATP = O-phospho-L-seryl-[protein] + ADP + H(+). The enzyme catalyses L-threonyl-[protein] + ATP = O-phospho-L-threonyl-[protein] + ADP + H(+). With respect to regulation, activated by DAG and phorbol esters. Phorbol-ester/DAG-type domain 1 binds DAG with high affinity and appears to play the dominant role in mediating translocation to the cell membrane and trans-Golgi network. Phorbol-ester/DAG-type domain 2 binds phorbol ester with higher affinity. Autophosphorylation of Ser-742 and phosphorylation of Ser-738 by PKC relieves auto-inhibition by the PH domain. Phosphorylation on Tyr-463 by the SRC-ABL1 pathway in response to oxidative stress, is also required for activation. Activated by DAPK1 under oxidative stress. Its function is as follows. Serine/threonine-protein kinase that converts transient diacylglycerol (DAG) signals into prolonged physiological effects downstream of PKC, and is involved in the regulation of MAPK8/JNK1 and Ras signaling, Golgi membrane integrity and trafficking, cell survival through NF-kappa-B activation, cell migration, cell differentiation by mediating HDAC7 nuclear export, cell proliferation via MAPK1/3 (ERK1/2) signaling, and plays a role in cardiac hypertrophy, VEGFA-induced angiogenesis, genotoxic-induced apoptosis and flagellin-stimulated inflammatory response. Phosphorylates the epidermal growth factor receptor (EGFR) on dual threonine residues, which leads to the suppression of epidermal growth factor (EGF)-induced MAPK8/JNK1 activation and subsequent JUN phosphorylation. Phosphorylates RIN1, inducing RIN1 binding to 14-3-3 proteins YWHAB, YWHAE and YWHAZ and increased competition with RAF1 for binding to GTP-bound form of Ras proteins (NRAS, HRAS and KRAS). Acts downstream of the heterotrimeric G-protein beta/gamma-subunit complex to maintain the structural integrity of the Golgi membranes, and is required for protein transport along the secretory pathway. In the trans-Golgi network (TGN), regulates the fission of transport vesicles that are on their way to the plasma membrane. May act by activating the lipid kinase phosphatidylinositol 4-kinase beta (PI4KB) at the TGN for the local synthesis of phosphorylated inositol lipids, which induces a sequential production of DAG, phosphatidic acid (PA) and lyso-PA (LPA) that are necessary for membrane fission and generation of specific transport carriers to the cell surface. Under oxidative stress, is phosphorylated at Tyr-463 via SRC-ABL1 and contributes to cell survival by activating IKK complex and subsequent nuclear translocation and activation of NFKB1. Involved in cell migration by regulating integrin alpha-5/beta-3 recycling and promoting its recruitment in newly forming focal adhesion. In osteoblast differentiation, mediates the bone morphogenetic protein 2 (BMP2)-induced nuclear export of HDAC7, which results in the inhibition of HDAC7 transcriptional repression of RUNX2. In neurons, plays an important role in neuronal polarity by regulating the biogenesis of TGN-derived dendritic vesicles, and is involved in the maintenance of dendritic arborization and Golgi structure in hippocampal cells. May potentiate mitogenesis induced by the neuropeptide bombesin or vasopressin by mediating an increase in the duration of MAPK1/3 (ERK1/2) signaling, which leads to accumulation of immediate-early gene products including FOS that stimulate cell cycle progression. Plays an important role in the proliferative response induced by low calcium in keratinocytes, through sustained activation of MAPK1/3 (ERK1/2) pathway. Downstream of novel PKC signaling, plays a role in cardiac hypertrophy by phosphorylating HDAC5, which in turn triggers XPO1/CRM1-dependent nuclear export of HDAC5, MEF2A transcriptional activation and induction of downstream target genes that promote myocyte hypertrophy and pathological cardiac remodeling. Mediates cardiac troponin I (TNNI3) phosphorylation at the PKA sites, which results in reduced myofilament calcium sensitivity, and accelerated crossbridge cycling kinetics. The PRKD1-HDAC5 pathway is also involved in angiogenesis by mediating VEGFA-induced specific subset of gene expression, cell migration, and tube formation. In response to VEGFA, is necessary and required for HDAC7 phosphorylation which induces HDAC7 nuclear export and endothelial cell proliferation and migration. During apoptosis induced by cytarabine and other genotoxic agents, PRKD1 is cleaved by caspase-3 at Asp-378, resulting in activation of its kinase function and increased sensitivity of cells to the cytotoxic effects of genotoxic agents. In epithelial cells, is required for transducing flagellin-stimulated inflammatory responses by binding and phosphorylating TLR5, which contributes to MAPK14/p38 activation and production of inflammatory cytokines. Acts as an activator of NLRP3 inflammasome assembly by mediating phosphorylation of NLRP3. May play a role in inflammatory response by mediating activation of NF-kappa-B. May be involved in pain transmission by directly modulating TRPV1 receptor. Plays a role in activated KRAS-mediated stabilization of ZNF304 in colorectal cancer (CRC) cells. Regulates nuclear translocation of transcription factor TFEB in macrophages upon live S.enterica infection. The sequence is that of Serine/threonine-protein kinase D1 (PRKD1) from Homo sapiens (Human).